A 348-amino-acid chain; its full sequence is Dihydroorotase (348 aa).

Residues His-17 and His-19 each contribute to the Zn(2+) site. Substrate is bound by residues 19–21 (HLR) and Asn-45. Residues Lys-103, His-140, and His-178 each contribute to the Zn(2+) site. Residue Lys-103 is modified to N6-carboxylysine. His-140 serves as a coordination point for substrate. A substrate-binding site is contributed by Leu-223. Asp-251 contributes to the Zn(2+) binding site. Residue Asp-251 is part of the active site. Substrate contacts are provided by His-255 and Ala-267.

The protein belongs to the metallo-dependent hydrolases superfamily. DHOase family. Class II DHOase subfamily. Homodimer. Zn(2+) serves as cofactor.

The catalysed reaction is (S)-dihydroorotate + H2O = N-carbamoyl-L-aspartate + H(+). Its pathway is pyrimidine metabolism; UMP biosynthesis via de novo pathway; (S)-dihydroorotate from bicarbonate: step 3/3. Catalyzes the reversible cyclization of carbamoyl aspartate to dihydroorotate. In Escherichia coli O7:K1 (strain IAI39 / ExPEC), this protein is Dihydroorotase.